A 601-amino-acid chain; its full sequence is Cdc42-interacting protein 4 (601 aa).

The interval 1–117 is required for translocation to the plasma membrane in response to insulin, podosome formation and interaction with AKAP9 and microtubules; that stretch reads MDWGTELWDQ…EMKQERKMHF (117 aa). One can recognise an F-BAR domain in the interval 1 to 264; sequence MDWGTELWDQ…AANAVDPKND (264 aa). A coiled-coil region spans residues 67-259; it reads FSQQQSFVQI…EGMKVAANAV (193 aa). 3 disordered regions span residues 280–358, 390–420, and 478–543; these read GDVE…GRDP, DFSHLPPEQQRKRLQQQLEERSRELQKEVDQ, and NRGD…SPIG. Polar residues predominate over residues 289 to 302; sequence QPMNRAPSDSSLGT. The segment at 293–537 is interaction with CDC42; the sequence is RAPSDSSLGT…TEFDEDFEEE (245 aa). Positions 293–601 are interaction with PDE6G; the sequence is RAPSDSSLGT…PTSYLRVTLN (309 aa). Residues S296, S298, and S299 each carry the phosphoserine modification. A compositionally biased stretch (basic residues) spans 314-329; it reads GRSRTKRWPFGKKNKP. S335 is modified (phosphoserine). The span at 336–346 shows a compositional bias: low complexity; that stretch reads PLGGPVPSALP. Position 351 is a phosphoserine (S351). Positions 388–481 form a coiled coil; it reads TEDFSHLPPE…ESRVLSNRGD (94 aa). The 78-residue stretch at 393–470 folds into the REM-1 domain; that stretch reads HLPPEQQRKR…VQKYEAWLAE (78 aa). The segment covering 407–420 has biased composition (basic and acidic residues); sequence LEERSRELQKEVDQ. The tract at residues 471–601 is required for interaction with FASLG and localization to lysosomes; it reads AESRVLSNRG…PTSYLRVTLN (131 aa). S482 is subject to Phosphoserine. Residues 487–541 are interaction with DNM2 and WASL; that stretch reads ARPPDPPTSAPPDSSSNSASQDTKESSEEPPSEESQDTPIYTEFDEDFEEEPTSP. A compositionally biased stretch (low complexity) spans 497–506; that stretch reads PPDSSSNSAS. Acidic residues predominate over residues 529 to 538; sequence EFDEDFEEEP. The tract at residues 529-601 is interaction with DNM1 and WASL; the sequence is EFDEDFEEEP…PTSYLRVTLN (73 aa). Residues 538–601 are required for podosome formation; it reads PTSPIGHCVA…PTSYLRVTLN (64 aa). One can recognise an SH3 domain in the interval 540-601; that stretch reads SPIGHCVAIY…PTSYLRVTLN (62 aa). Residues 544 to 601 are interaction with WAS; it reads HCVAIYHFEGSSEGTISMAEGEDLSLMEEDKGDGWTRVRRKEGGEGYVPTSYLRVTLN. An interaction with ARHGAP17, DAAM1, DIAPH1 and DIAPH2 region spans residues 546–601; it reads VAIYHFEGSSEGTISMAEGEDLSLMEEDKGDGWTRVRRKEGGEGYVPTSYLRVTLN.

It belongs to the FNBP1 family. As to quaternary structure, homodimerizes, the dimers can polymerize end-to-end to form filamentous structures. Interacts with AKAP9, ARHGAP17, DAAM1, DIAPH1, DIAPH2, DNM1, FASLG/FASL, GAPVD1, LYN, microtubules, PDE6G, SRC and WAS/WASP. Interacts with the ligand binding domain of the thyroid receptor (TR) in the presence of thyroid hormone. May interact with CTNNB1 and HD/HTT. Interacts specifically with GTP-bound CDC42 and RHOQ. Interacts with DNM2 and WASL. Post-translationally, tyrosine phosphorylated. Also phosphorylated by PKA.

The protein localises to the cytoplasm. It is found in the cytoskeleton. The protein resides in the cell cortex. It localises to the lysosome. Its subcellular location is the golgi apparatus. The protein localises to the cell membrane. It is found in the cell projection. The protein resides in the phagocytic cup. Its function is as follows. Required to coordinate membrane tubulation with reorganization of the actin cytoskeleton during endocytosis. Also acts as a link between CDC42 signaling and regulation of the actin cytoskeleton. Binds to lipids such as phosphatidylinositol 4,5-bisphosphate and phosphatidylserine and promotes membrane invagination and the formation of tubules. Also enhances actin polymerization in the vicinity of membrane tubules by recruiting WASL/N-WASP which in turn activates the Arp2/3 complex. Actin polymerization and dynamin may promote the fission of membrane tubules to form endocytic vesicles. Required for the formation of podosomes, actin-rich adhesion structures specific to monocyte-derived cells. Required for translocation of GLUT4 to the plasma membrane in response to insulin signaling. May be required for the lysosomal retention of FASLG/FASL. The chain is Cdc42-interacting protein 4 (TRIP10) from Pongo abelii (Sumatran orangutan).